Here is a 331-residue protein sequence, read N- to C-terminus: tRNA N6-adenosine threonylcarbamoyltransferase (331 aa).

H109, H113, and Y130 together coordinate Fe cation. Substrate-binding positions include 130-134 (YLSGG), D162, D183, and S262. D290 provides a ligand contact to Fe cation.

This sequence belongs to the KAE1 / TsaD family. Fe(2+) serves as cofactor.

It is found in the cytoplasm. It carries out the reaction L-threonylcarbamoyladenylate + adenosine(37) in tRNA = N(6)-L-threonylcarbamoyladenosine(37) in tRNA + AMP + H(+). In terms of biological role, required for the formation of a threonylcarbamoyl group on adenosine at position 37 (t(6)A37) in tRNAs that read codons beginning with adenine. Is probably involved in the transfer of the threonylcarbamoyl moiety of threonylcarbamoyl-AMP (TC-AMP) to the N6 group of A37. The protein is tRNA N6-adenosine threonylcarbamoyltransferase of Metallosphaera sedula (strain ATCC 51363 / DSM 5348 / JCM 9185 / NBRC 15509 / TH2).